We begin with the raw amino-acid sequence, 385 residues long: Dual-specificity RNA methyltransferase RlmN (385 aa).

The Proton acceptor role is filled by glutamate 113. The Radical SAM core domain maps to 120-352; sequence VGRAGALCVS…NRAGYASPIR (233 aa). Cysteine 127 and cysteine 363 are disulfide-bonded. Cysteine 134, cysteine 138, and cysteine 141 together coordinate [4Fe-4S] cluster. S-adenosyl-L-methionine contacts are provided by residues 189–190, serine 221, 243–245, and asparagine 320; these read GE and SLH. Cysteine 363 functions as the S-methylcysteine intermediate in the catalytic mechanism.

The protein belongs to the radical SAM superfamily. RlmN family. It depends on [4Fe-4S] cluster as a cofactor.

The protein localises to the cytoplasm. The enzyme catalyses adenosine(2503) in 23S rRNA + 2 reduced [2Fe-2S]-[ferredoxin] + 2 S-adenosyl-L-methionine = 2-methyladenosine(2503) in 23S rRNA + 5'-deoxyadenosine + L-methionine + 2 oxidized [2Fe-2S]-[ferredoxin] + S-adenosyl-L-homocysteine. It catalyses the reaction adenosine(37) in tRNA + 2 reduced [2Fe-2S]-[ferredoxin] + 2 S-adenosyl-L-methionine = 2-methyladenosine(37) in tRNA + 5'-deoxyadenosine + L-methionine + 2 oxidized [2Fe-2S]-[ferredoxin] + S-adenosyl-L-homocysteine. In terms of biological role, specifically methylates position 2 of adenine 2503 in 23S rRNA and position 2 of adenine 37 in tRNAs. m2A2503 modification seems to play a crucial role in the proofreading step occurring at the peptidyl transferase center and thus would serve to optimize ribosomal fidelity. The protein is Dual-specificity RNA methyltransferase RlmN of Phenylobacterium zucineum (strain HLK1).